The sequence spans 76 residues: Histone acetyltransferase (76 aa).

Physically interacts with histone H3 in infected macrophages.

The protein localises to the secreted. It localises to the host cytoplasm. It is found in the host nucleus. The catalysed reaction is L-lysyl-[protein] + acetyl-CoA = N(6)-acetyl-L-lysyl-[protein] + CoA + H(+). With respect to regulation, is completely inhibited by anacardic acid, an inhibitor of HAT activity. Histone acetyltransferase, which by binding to the host chromatin, may manipulate the expression of host genes involved in anti-inflammatory responses to evade clearance and to survive in the intracellular milieu. Acetylates histone H3 at the 'Lys-9' and 'Lys-14' positions. The polypeptide is Histone acetyltransferase (Mycobacterium tuberculosis (strain CDC 1551 / Oshkosh)).